The chain runs to 317 residues: Apolipoprotein E (317 aa).

The signal sequence occupies residues 1–18 (MKVLWAALLVTFLAGCQA). 8 tandem repeats follow at residues 80-101 (TLMD…EQLS), 102-123 (PVAE…ARLG), 124-145 (ADME…AMLG), 146-167 (QSTE…KRLL), 168-189 (RDAD…EGAE), 190-211 (RGVS…VRAA), 212-233 (TVGS…ERLR), and 234-255 (ARME…EQVA). Positions 80 to 255 (TLMDETMKEL…RLDEVKEQVA (176 aa)) are 8 X 22 AA approximate tandem repeats. Met-143 bears the Methionine sulfoxide mark. Position 147 is a phosphoserine (Ser-147). The interval 158 to 168 (HLRKLRKRLLR) is LDL and other lipoprotein receptors binding. Residue 162-165 (LRKR) coordinates heparin. The interval 210 to 290 (AATVGSLASQ…SWFEPLVEDM (81 aa)) is lipid-binding and lipoprotein association. 229 to 236 (GERLRARM) is a heparin binding site. A homooligomerization region spans residues 266–317 (QQISLQAEAFQARLKSWFEPLVEDMQRQWAGLVEKVQAAVGASTAPVPSDNH). Positions 278–290 (RLKSWFEPLVEDM) are specificity for association with VLDL.

The protein belongs to the apolipoprotein A1/A4/E family. As to quaternary structure, homotetramer. May interact with ABCA1; functionally associated with ABCA1 in the biogenesis of HDLs. May interact with APP/A4 amyloid-beta peptide; the interaction is extremely stable in vitro but its physiological significance is unclear. May interact with MAPT. May interact with MAP2. In the cerebrospinal fluid, interacts with secreted SORL1. Interacts with PMEL; this allows the loading of PMEL luminal fragment on ILVs to induce fibril nucleation. Post-translationally, APOE exists as multiple glycosylated and sialylated glycoforms within cells and in plasma. The extent of glycosylation and sialylation are tissue and context specific. Glycated in plasma VLDL. In terms of processing, phosphorylated by FAM20C in the extracellular medium.

The protein localises to the secreted. The protein resides in the extracellular space. It localises to the extracellular matrix. It is found in the extracellular vesicle. Its subcellular location is the endosome. The protein localises to the multivesicular body. In terms of biological role, APOE is an apolipoprotein, a protein associating with lipid particles, that mainly functions in lipoprotein-mediated lipid transport between organs via the plasma and interstitial fluids. APOE is a core component of plasma lipoproteins and is involved in their production, conversion and clearance. Apolipoproteins are amphipathic molecules that interact both with lipids of the lipoprotein particle core and the aqueous environment of the plasma. As such, APOE associates with chylomicrons, chylomicron remnants, very low density lipoproteins (VLDL) and intermediate density lipoproteins (IDL) but shows a preferential binding to high-density lipoproteins (HDL). It also binds a wide range of cellular receptors including the LDL receptor/LDLR, the LDL receptor-related proteins LRP1, LRP2 and LRP8 and the very low-density lipoprotein receptor/VLDLR that mediate the cellular uptake of the APOE-containing lipoprotein particles. Finally, APOE also has a heparin-binding activity and binds heparan-sulfate proteoglycans on the surface of cells, a property that supports the capture and the receptor-mediated uptake of APOE-containing lipoproteins by cells. A main function of APOE is to mediate lipoprotein clearance through the uptake of chylomicrons, VLDLs, and HDLs by hepatocytes. APOE is also involved in the biosynthesis by the liver of VLDLs as well as their uptake by peripheral tissues ensuring the delivery of triglycerides and energy storage in muscle, heart and adipose tissues. By participating in the lipoprotein-mediated distribution of lipids among tissues, APOE plays a critical role in plasma and tissues lipid homeostasis. APOE is also involved in two steps of reverse cholesterol transport, the HDLs-mediated transport of cholesterol from peripheral tissues to the liver, and thereby plays an important role in cholesterol homeostasis. First, it is functionally associated with ABCA1 in the biogenesis of HDLs in tissues. Second, it is enriched in circulating HDLs and mediates their uptake by hepatocytes. APOE also plays an important role in lipid transport in the central nervous system, regulating neuron survival and sprouting. The chain is Apolipoprotein E (APOE) from Papio anubis (Olive baboon).